The chain runs to 202 residues: Small ribosomal subunit protein uS4c (202 aa).

Residues 18-45 (LPGLTRKMAKRKSPPGQHGAASKKPSQY) are disordered. The region spanning 90–152 (MRLDTTIFRL…SRSRKLIEGY (63 aa)) is the S4 RNA-binding domain.

The protein belongs to the universal ribosomal protein uS4 family. As to quaternary structure, part of the 30S ribosomal subunit. Contacts protein S5. The interaction surface between S4 and S5 is involved in control of translational fidelity.

It is found in the plastid. The protein resides in the chloroplast. Its function is as follows. One of the primary rRNA binding proteins, it binds directly to 16S rRNA where it nucleates assembly of the body of the 30S subunit. With S5 and S12 plays an important role in translational accuracy. The chain is Small ribosomal subunit protein uS4c (rps4) from Nephroselmis olivacea (Green alga).